We begin with the raw amino-acid sequence, 571 residues long: Proline--tRNA ligase (571 aa).

This sequence belongs to the class-II aminoacyl-tRNA synthetase family. ProS type 1 subfamily. In terms of assembly, homodimer.

The protein localises to the cytoplasm. The enzyme catalyses tRNA(Pro) + L-proline + ATP = L-prolyl-tRNA(Pro) + AMP + diphosphate. In terms of biological role, catalyzes the attachment of proline to tRNA(Pro) in a two-step reaction: proline is first activated by ATP to form Pro-AMP and then transferred to the acceptor end of tRNA(Pro). As ProRS can inadvertently accommodate and process non-cognate amino acids such as alanine and cysteine, to avoid such errors it has two additional distinct editing activities against alanine. One activity is designated as 'pretransfer' editing and involves the tRNA(Pro)-independent hydrolysis of activated Ala-AMP. The other activity is designated 'posttransfer' editing and involves deacylation of mischarged Ala-tRNA(Pro). The misacylated Cys-tRNA(Pro) is not edited by ProRS. This Actinobacillus pleuropneumoniae serotype 7 (strain AP76) protein is Proline--tRNA ligase.